The primary structure comprises 484 residues: Antibiotic efflux pump outer membrane protein ArpC (484 aa).

A signal peptide spans 1 to 17; sequence MTKSLLSLAVTAFILGG. Cys-18 carries N-palmitoyl cysteine lipidation. The S-diacylglycerol cysteine moiety is linked to residue Cys-18.

This sequence belongs to the outer membrane factor (OMF) (TC 1.B.17) family.

It localises to the cell outer membrane. In terms of biological role, the outer membrane component of an antibiotic efflux pump. Confers resistance to numerous structurally unrelated antibiotics such as carbenicillin, chloramphenicol, erythromycin, novobiocin, streptomycin and tetracycline. Is not involved in organic solvent efflux. In Pseudomonas putida (Arthrobacter siderocapsulatus), this protein is Antibiotic efflux pump outer membrane protein ArpC (arpC).